Here is a 90-residue protein sequence, read N- to C-terminus: Probable Fe(2+)-trafficking protein (90 aa).

The protein belongs to the Fe(2+)-trafficking protein family.

Its function is as follows. Could be a mediator in iron transactions between iron acquisition and iron-requiring processes, such as synthesis and/or repair of Fe-S clusters in biosynthetic enzymes. This Halorhodospira halophila (strain DSM 244 / SL1) (Ectothiorhodospira halophila (strain DSM 244 / SL1)) protein is Probable Fe(2+)-trafficking protein.